The sequence spans 148 residues: EKC/KEOPS complex subunit Lage3 (148 aa).

A disordered region spans residues 1-21 (MQTAHTGLSHTADGADGQTSR).

The protein belongs to the CTAG/PCC1 family. As to quaternary structure, component of the EKC/KEOPS complex composed of at least GON7, TP53RK, TPRKB, OSGEP and LAGE3; the whole complex dimerizes.

It localises to the cytoplasm. The protein resides in the nucleus. Functionally, component of the EKC/KEOPS complex that is required for the formation of a threonylcarbamoyl group on adenosine at position 37 (t(6)A37) in tRNAs that read codons beginning with adenine. The complex is probably involved in the transfer of the threonylcarbamoyl moiety of threonylcarbamoyl-AMP (TC-AMP) to the N6 group of A37. LAGE3 functions as a dimerization module for the complex. This chain is EKC/KEOPS complex subunit Lage3, found in Mus musculus (Mouse).